Reading from the N-terminus, the 214-residue chain is Pyridoxine/pyridoxamine 5'-phosphate oxidase (214 aa).

Substrate is bound by residues 8–11 (RKSY) and Lys-67. FMN is bound by residues 62–67 (RVVLLK), 77–78 (YT), Lys-84, and Gln-106. Tyr-124, Arg-128, and Ser-132 together coordinate substrate. Residues 141 to 142 (QS) and Trp-186 contribute to the FMN site. 192-194 (RLH) provides a ligand contact to substrate. Arg-196 is a binding site for FMN.

The protein belongs to the pyridoxamine 5'-phosphate oxidase family. In terms of assembly, homodimer. The cofactor is FMN.

It catalyses the reaction pyridoxamine 5'-phosphate + O2 + H2O = pyridoxal 5'-phosphate + H2O2 + NH4(+). It carries out the reaction pyridoxine 5'-phosphate + O2 = pyridoxal 5'-phosphate + H2O2. The protein operates within cofactor metabolism; pyridoxal 5'-phosphate salvage; pyridoxal 5'-phosphate from pyridoxamine 5'-phosphate: step 1/1. It functions in the pathway cofactor metabolism; pyridoxal 5'-phosphate salvage; pyridoxal 5'-phosphate from pyridoxine 5'-phosphate: step 1/1. In terms of biological role, catalyzes the oxidation of either pyridoxine 5'-phosphate (PNP) or pyridoxamine 5'-phosphate (PMP) into pyridoxal 5'-phosphate (PLP). This chain is Pyridoxine/pyridoxamine 5'-phosphate oxidase, found in Flavobacterium psychrophilum (strain ATCC 49511 / DSM 21280 / CIP 103535 / JIP02/86).